The following is a 276-amino-acid chain: MTKFRGCIDIHSGQVKQIVGGTLTQDDTTELNHKSTTTENFVSTKPSSYYAELYKNAGINGCHVIKLGSNPENDEAAKLACQSWPNNLQVGGGINGDNALEWLDVHKASHVILTSWLFSDSDEGKEFDWVKLKRVSELVGKSRLIVDLSCRELRVDDKIEWVVAMNKWQTLTNNKLSAEFLGEVSQYCDEFLIHAADVEGLCNGIDVNLVAKLGEWCPEGFEGKIVYAGGARSVKDLDTVSKLSDDKVDLTYGSALDVFGGKLVKFDDLVSWNELH.

The protein belongs to the HisA/HisF family.

The protein localises to the cytoplasm. The enzyme catalyses 1-(5-phospho-beta-D-ribosyl)-5-[(5-phospho-beta-D-ribosylamino)methylideneamino]imidazole-4-carboxamide = 5-[(5-phospho-1-deoxy-D-ribulos-1-ylimino)methylamino]-1-(5-phospho-beta-D-ribosyl)imidazole-4-carboxamide. It participates in amino-acid biosynthesis; L-histidine biosynthesis; L-histidine from 5-phospho-alpha-D-ribose 1-diphosphate: step 4/9. The protein is 1-(5-phosphoribosyl)-5-[(5-phosphoribosylamino)methylideneamino] imidazole-4-carboxamide isomerase (HIS6) of Debaryomyces hansenii (strain ATCC 36239 / CBS 767 / BCRC 21394 / JCM 1990 / NBRC 0083 / IGC 2968) (Yeast).